Consider the following 98-residue polypeptide: Small ribosomal subunit protein uS17 (98 aa).

This sequence belongs to the universal ribosomal protein uS17 family. Part of the 30S ribosomal subunit.

Functionally, one of the primary rRNA binding proteins, it binds specifically to the 5'-end of 16S ribosomal RNA. The sequence is that of Small ribosomal subunit protein uS17 from Leptothrix cholodnii (strain ATCC 51168 / LMG 8142 / SP-6) (Leptothrix discophora (strain SP-6)).